The sequence spans 453 residues: Bifunctional protein GlmU (453 aa).

A pyrophosphorylase region spans residues 1–225; it reads MNIVILAAGT…EWETLGVNSK (225 aa). UDP-N-acetyl-alpha-D-glucosamine-binding positions include 6–9, lysine 20, glutamine 71, 76–77, 98–100, glycine 135, glutamate 150, asparagine 165, and asparagine 223; these read LAAG, GT, and YGD. Aspartate 100 is a Mg(2+) binding site. Asparagine 223 is a Mg(2+) binding site. Residues 226 to 246 are linker; that stretch reads AQLAELERIHQRKLAEALLAD. Positions 247-453 are N-acetyltransferase; it reads GVTLADPARI…GYVRPVKKKS (207 aa). UDP-N-acetyl-alpha-D-glucosamine contacts are provided by arginine 329 and lysine 347. Catalysis depends on histidine 359, which acts as the Proton acceptor. Residues tyrosine 362 and asparagine 373 each contribute to the UDP-N-acetyl-alpha-D-glucosamine site. Acetyl-CoA contacts are provided by residues alanine 376, 382 to 383, serine 401, and alanine 419; that span reads NY.

In the N-terminal section; belongs to the N-acetylglucosamine-1-phosphate uridyltransferase family. It in the C-terminal section; belongs to the transferase hexapeptide repeat family. Homotrimer. Mg(2+) serves as cofactor.

The protein resides in the cytoplasm. It carries out the reaction alpha-D-glucosamine 1-phosphate + acetyl-CoA = N-acetyl-alpha-D-glucosamine 1-phosphate + CoA + H(+). The enzyme catalyses N-acetyl-alpha-D-glucosamine 1-phosphate + UTP + H(+) = UDP-N-acetyl-alpha-D-glucosamine + diphosphate. It participates in nucleotide-sugar biosynthesis; UDP-N-acetyl-alpha-D-glucosamine biosynthesis; N-acetyl-alpha-D-glucosamine 1-phosphate from alpha-D-glucosamine 6-phosphate (route II): step 2/2. The protein operates within nucleotide-sugar biosynthesis; UDP-N-acetyl-alpha-D-glucosamine biosynthesis; UDP-N-acetyl-alpha-D-glucosamine from N-acetyl-alpha-D-glucosamine 1-phosphate: step 1/1. Its pathway is bacterial outer membrane biogenesis; LPS lipid A biosynthesis. Catalyzes the last two sequential reactions in the de novo biosynthetic pathway for UDP-N-acetylglucosamine (UDP-GlcNAc). The C-terminal domain catalyzes the transfer of acetyl group from acetyl coenzyme A to glucosamine-1-phosphate (GlcN-1-P) to produce N-acetylglucosamine-1-phosphate (GlcNAc-1-P), which is converted into UDP-GlcNAc by the transfer of uridine 5-monophosphate (from uridine 5-triphosphate), a reaction catalyzed by the N-terminal domain. The chain is Bifunctional protein GlmU from Burkholderia thailandensis (strain ATCC 700388 / DSM 13276 / CCUG 48851 / CIP 106301 / E264).